A 206-amino-acid chain; its full sequence is Large ribosomal subunit protein uL4 (206 aa).

Residues 46–77 (GTRAQKDREQVRHSTKKPFKQKGTGNARAGMT) are disordered.

It belongs to the universal ribosomal protein uL4 family. As to quaternary structure, part of the 50S ribosomal subunit.

Its function is as follows. One of the primary rRNA binding proteins, this protein initially binds near the 5'-end of the 23S rRNA. It is important during the early stages of 50S assembly. It makes multiple contacts with different domains of the 23S rRNA in the assembled 50S subunit and ribosome. In terms of biological role, forms part of the polypeptide exit tunnel. This chain is Large ribosomal subunit protein uL4, found in Paracidovorax citrulli (strain AAC00-1) (Acidovorax citrulli).